The sequence spans 94 residues: Neurotoxin 213 (94 aa).

The first 22 residues, 1–22, serve as a signal peptide directing secretion; that stretch reads MLKFILTCTSVILFTAVEDSSC. The LCN-type CS-alpha/beta domain maps to 24–88; that stretch reads KGGNYPISVY…YWDYHRNNCK (65 aa). 3 disulfide bridges follow: Cys39/Cys62, Cys48/Cys67, and Cys52/Cys69.

This sequence belongs to the long (3 C-C) scorpion toxin superfamily. Expressed by the venom gland.

It is found in the secreted. This chain is Neurotoxin 213, found in Lychas mucronatus (Chinese swimming scorpion).